Consider the following 253-residue polypeptide: Ubiquinone/menaquinone biosynthesis C-methyltransferase UbiE (253 aa).

S-adenosyl-L-methionine-binding positions include Thr76, Asp97, and 125-126 (NA).

It belongs to the class I-like SAM-binding methyltransferase superfamily. MenG/UbiE family.

It carries out the reaction a 2-demethylmenaquinol + S-adenosyl-L-methionine = a menaquinol + S-adenosyl-L-homocysteine + H(+). It catalyses the reaction a 2-methoxy-6-(all-trans-polyprenyl)benzene-1,4-diol + S-adenosyl-L-methionine = a 5-methoxy-2-methyl-3-(all-trans-polyprenyl)benzene-1,4-diol + S-adenosyl-L-homocysteine + H(+). It participates in quinol/quinone metabolism; menaquinone biosynthesis; menaquinol from 1,4-dihydroxy-2-naphthoate: step 2/2. The protein operates within cofactor biosynthesis; ubiquinone biosynthesis. Functionally, methyltransferase required for the conversion of demethylmenaquinol (DMKH2) to menaquinol (MKH2) and the conversion of 2-polyprenyl-6-methoxy-1,4-benzoquinol (DDMQH2) to 2-polyprenyl-3-methyl-6-methoxy-1,4-benzoquinol (DMQH2). The protein is Ubiquinone/menaquinone biosynthesis C-methyltransferase UbiE of Bradyrhizobium sp. (strain BTAi1 / ATCC BAA-1182).